The primary structure comprises 350 residues: Uroporphyrinogen decarboxylase (350 aa).

Residues 28 to 32 (RQAGR), Asp-78, Tyr-155, Ser-210, and His-325 contribute to the substrate site.

The protein belongs to the uroporphyrinogen decarboxylase family. Homodimer.

It is found in the cytoplasm. It carries out the reaction uroporphyrinogen III + 4 H(+) = coproporphyrinogen III + 4 CO2. The protein operates within porphyrin-containing compound metabolism; protoporphyrin-IX biosynthesis; coproporphyrinogen-III from 5-aminolevulinate: step 4/4. Catalyzes the decarboxylation of four acetate groups of uroporphyrinogen-III to yield coproporphyrinogen-III. In Picosynechococcus sp. (strain ATCC 27264 / PCC 7002 / PR-6) (Agmenellum quadruplicatum), this protein is Uroporphyrinogen decarboxylase.